The primary structure comprises 295 residues: Pyridoxal 5'-phosphate synthase subunit PdxS (295 aa).

Residue aspartate 25 coordinates D-ribose 5-phosphate. Lysine 82 serves as the catalytic Schiff-base intermediate with D-ribose 5-phosphate. Glycine 154 serves as a coordination point for D-ribose 5-phosphate. Arginine 166 provides a ligand contact to D-glyceraldehyde 3-phosphate. D-ribose 5-phosphate-binding positions include glycine 215 and 236 to 237; that span reads GS.

This sequence belongs to the PdxS/SNZ family. As to quaternary structure, in the presence of PdxT, forms a dodecamer of heterodimers.

It carries out the reaction aldehydo-D-ribose 5-phosphate + D-glyceraldehyde 3-phosphate + L-glutamine = pyridoxal 5'-phosphate + L-glutamate + phosphate + 3 H2O + H(+). Its pathway is cofactor biosynthesis; pyridoxal 5'-phosphate biosynthesis. Its function is as follows. Catalyzes the formation of pyridoxal 5'-phosphate from ribose 5-phosphate (RBP), glyceraldehyde 3-phosphate (G3P) and ammonia. The ammonia is provided by the PdxT subunit. Can also use ribulose 5-phosphate and dihydroxyacetone phosphate as substrates, resulting from enzyme-catalyzed isomerization of RBP and G3P, respectively. The chain is Pyridoxal 5'-phosphate synthase subunit PdxS from Bacillus anthracis (strain A0248).